Consider the following 96-residue polypeptide: Aspartyl/glutamyl-tRNA(Asn/Gln) amidotransferase subunit C (96 aa).

Belongs to the GatC family. In terms of assembly, heterotrimer of A, B and C subunits.

The catalysed reaction is L-glutamyl-tRNA(Gln) + L-glutamine + ATP + H2O = L-glutaminyl-tRNA(Gln) + L-glutamate + ADP + phosphate + H(+). It catalyses the reaction L-aspartyl-tRNA(Asn) + L-glutamine + ATP + H2O = L-asparaginyl-tRNA(Asn) + L-glutamate + ADP + phosphate + 2 H(+). Its function is as follows. Allows the formation of correctly charged Asn-tRNA(Asn) or Gln-tRNA(Gln) through the transamidation of misacylated Asp-tRNA(Asn) or Glu-tRNA(Gln) in organisms which lack either or both of asparaginyl-tRNA or glutaminyl-tRNA synthetases. The reaction takes place in the presence of glutamine and ATP through an activated phospho-Asp-tRNA(Asn) or phospho-Glu-tRNA(Gln). In Neisseria gonorrhoeae (strain ATCC 700825 / FA 1090), this protein is Aspartyl/glutamyl-tRNA(Asn/Gln) amidotransferase subunit C.